The chain runs to 156 residues: Cell division protein SepF (156 aa).

The disordered stretch occupies residues 17–44 (PETADYYEDQQPAQQAPAPVPTPAPTRS).

Belongs to the SepF family. In terms of assembly, homodimer. Interacts with FtsZ.

It localises to the cytoplasm. In terms of biological role, cell division protein that is part of the divisome complex and is recruited early to the Z-ring. Probably stimulates Z-ring formation, perhaps through the cross-linking of FtsZ protofilaments. Its function overlaps with FtsA. This chain is Cell division protein SepF, found in Limosilactobacillus fermentum (strain NBRC 3956 / LMG 18251) (Lactobacillus fermentum).